The primary structure comprises 260 residues: HTH-type transcriptional repressor NanR (260 aa).

The segment at 1 to 20 is disordered; the sequence is MNPFDSQSEDASDAIGRSLG. In terms of domain architecture, HTH gntR-type spans 27–95; that stretch reads KKLSEMVEEE…NGERARVSRP (69 aa). The segment at residues 55-74 is a DNA-binding region (H-T-H motif); the sequence is ERELMAFFNVGRPSVREALA.

The protein belongs to the NanR family.

Transcriptional repressor that controls expression of the genes required for the catabolism of sialic acids. The protein is HTH-type transcriptional repressor NanR of Cronobacter sakazakii (strain ATCC BAA-894) (Enterobacter sakazakii).